A 359-amino-acid chain; its full sequence is Peptide chain release factor 1 (359 aa).

Q235 bears the N5-methylglutamine mark. The segment at 280 to 306 (AERQRADSERSADRKSQVGSGDRSERI) is disordered.

The protein belongs to the prokaryotic/mitochondrial release factor family. Methylated by PrmC. Methylation increases the termination efficiency of RF1.

It is found in the cytoplasm. Peptide chain release factor 1 directs the termination of translation in response to the peptide chain termination codons UAG and UAA. This chain is Peptide chain release factor 1, found in Rhizobium johnstonii (strain DSM 114642 / LMG 32736 / 3841) (Rhizobium leguminosarum bv. viciae).